Here is a 237-residue protein sequence, read N- to C-terminus: Ribonuclease 3 (237 aa).

In terms of domain architecture, RNase III spans 4-133 (LTELENSLGV…VLAAIYIDKG (130 aa)). Glu-46 is a binding site for Mg(2+). Catalysis depends on residues Asp-50 and Glu-122. A Mg(2+)-binding site is contributed by Glu-122. In terms of domain architecture, DRBM spans 160–229 (DYKSRLQELI…AKVALQQFEN (70 aa)).

It belongs to the ribonuclease III family. As to quaternary structure, homodimer. Mg(2+) is required as a cofactor.

The protein resides in the cytoplasm. The catalysed reaction is Endonucleolytic cleavage to 5'-phosphomonoester.. Functionally, digests double-stranded RNA. Involved in the processing of primary rRNA transcript to yield the immediate precursors to the large and small rRNAs (23S and 16S). Processes some mRNAs, and tRNAs when they are encoded in the rRNA operon. Processes pre-crRNA and tracrRNA of type II CRISPR loci if present in the organism. In Dehalococcoides mccartyi (strain CBDB1), this protein is Ribonuclease 3.